The primary structure comprises 346 residues: Probable RNA methyltransferase PSPA7_3453 (346 aa).

The active-site Proton acceptor is the Glu-91. Residues 94–320 (LLPRGGLCVS…TKVRNSAGQD (227 aa)) form the Radical SAM core domain. A disulfide bridge connects residues Cys-101 and Cys-325. [4Fe-4S] cluster contacts are provided by Cys-108, Cys-112, and Cys-115. S-adenosyl-L-methionine-binding positions include 153–154 (GE), Ser-183, 206–208 (SLH), and Asn-282. Cys-325 acts as the S-methylcysteine intermediate in catalysis.

Belongs to the radical SAM superfamily. RlmN family. It depends on [4Fe-4S] cluster as a cofactor.

It is found in the cytoplasm. In Pseudomonas paraeruginosa (strain DSM 24068 / PA7) (Pseudomonas aeruginosa (strain PA7)), this protein is Probable RNA methyltransferase PSPA7_3453.